A 481-amino-acid chain; its full sequence is Sestrin-1 (481 aa).

Residues 63–244 (FADAFTDLGR…ICDITNGNHG (182 aa)) are N-terminal domain; may mediate the alkylhydroperoxide reductase activity. C122 acts as the Cysteine sulfenic acid (-SOH) intermediate in catalysis. Residues 295-316 (KTESMVFSTEDEDPPPDIDVSR) form a disordered region. The tract at residues 310–481 (PDIDVSRHFE…ALRAITRYMT (172 aa)) is C-terminal domain; mediates TORC1 regulation. L-leucine is bound by residues 375–378 (TYNT), T387, and E452.

Belongs to the sestrin family.

It is found in the nucleus. The protein resides in the cytoplasm. The enzyme catalyses a hydroperoxide + L-cysteinyl-[protein] = S-hydroxy-L-cysteinyl-[protein] + an alcohol. May function as an intracellular leucine sensor that negatively regulates the TORC1 signaling pathway through the GATOR complex. In absence of leucine, binds the GATOR subcomplex GATOR2 and prevents TORC1 signaling. Binding of leucine to SESN2 disrupts its interaction with GATOR2 thereby activating the TORC1 signaling pathway. This stress-inducible metabolic regulator may also play a role in protection against oxidative and genotoxic stresses. May prevent the accumulation of reactive oxygen species (ROS) through the alkylhydroperoxide reductase activity born by the N-terminal domain of the protein. The sequence is that of Sestrin-1 from Xenopus laevis (African clawed frog).